We begin with the raw amino-acid sequence, 718 residues long: MSNESKCPFSGHNSKPQVTVGGGTANLHWWPNQLRVDLLNQHSERSNPLGKDFNYRQEFKKLDYYALKADIKNVLTDSQDWWPADWGNYTGLFIRLAWHAAGTYRMGDGRGGAGRGQQRFAPLNSWPDNASLDKARRLLWPVKQKYGQKISWADLFILAGNIALESSGFRTFGFGAGREDVWEPDNDVNWGDEKEWLAHRNSEALAGSNLAATEMGLIYVNPEGPQASGDPRSAAPFIRATFGNMAMDDEEIVALIAGGHTLGKTHGAAPADHVQADPEGAPIEQMGFGWANSYGTGVGKDAITSGLEVIWSQTPTQWSNYFFENLFKYEWVQERSPAGAIQWVAADAEAIIPDPFDPSIKRKPTMLTTDLTLRFDPEFEKISRRFLNDPQAFANAFARAWFKLTHRDMGPKARYLGPEVPAEDLIWQDPLPAASATPSSASIADAKAKIVALGLSAGELVSLAWASASTFRGGDKRGGANGAHIALSPQREWEVNKKAVETLTQIEELKASTQLSLADLIVLAGNVGVEQAAQAAGFNITVPFAPGRVDALQSQTDVESFQLLLGLADGFRNWKKQGVNTPAEVLLIDKAQQLTLTAPELTALIGGLRVLGTNWDGSQHGVFTQQVGVLSTDFFTNLLDMSNVWAPVDSTSEVFEGKDRKSGTVKFTATRNDLVFGSNSILRALAEVYAQADGKEKFVQDFVAAWTKVMNLDRFDLA.

The segment at residues tryptophan 98–tyrosine 219 is a cross-link (tryptophyl-tyrosyl-methioninium (Trp-Tyr) (with M-245)). Histidine 99 acts as the Proton acceptor in catalysis. The tryptophyl-tyrosyl-methioninium (Tyr-Met) (with W-98) cross-link spans tyrosine 219–methionine 245. A heme b-binding site is contributed by histidine 260.

Belongs to the peroxidase family. Peroxidase/catalase subfamily. In terms of assembly, homodimer or homotetramer. It depends on heme b as a cofactor. Post-translationally, formation of the three residue Trp-Tyr-Met cross-link is important for the catalase, but not the peroxidase activity of the enzyme.

It carries out the reaction H2O2 + AH2 = A + 2 H2O. It catalyses the reaction 2 H2O2 = O2 + 2 H2O. In terms of biological role, bifunctional enzyme with both catalase and broad-spectrum peroxidase activity. The chain is Catalase-peroxidase from Acinetobacter baumannii (strain ATCC 17978 / DSM 105126 / CIP 53.77 / LMG 1025 / NCDC KC755 / 5377).